The following is a 553-amino-acid chain: Zinc finger protein 324A (553 aa).

The region spanning 1–72 (MAFEDVAVYF…SGTDTTLSRT (72 aa)) is the KRAB domain. The Nuclear localization signal signature appears at 130-135 (PSRERK). The disordered stretch occupies residues 186 to 221 (GRQPRTPERQKPCAQEVPGRTFGSAQDLEAAGGRGH). 9 consecutive C2H2-type zinc fingers follow at residues 257–279 (FECR…LRTH), 285–307 (YECA…QRIH), 313–335 (YACP…QRIH), 341–363 (FRCS…RKIH), 369–391 (YACA…ERTH), 397–419 (FVCA…QRVH), 425–447 (FACP…QLLH), 453–475 (FRCV…RRIH), and 481–503 (FVCT…QRIH). The tract at residues 502–553 (IHTGEKTVRRSRASLHPQARSVAGASSEGAPAKETEPTPASGPAAVSQPAEV) is disordered.

The protein belongs to the krueppel C2H2-type zinc-finger protein family. Expressed at high levels in the spleen, thymus, and PBMC, at low levels in the prostate, ovary, small intestine, colon (mucosal lining), placenta, lung, and pancreas, and very weakly expressed in the liver and kidney.

It is found in the nucleus. In terms of biological role, may be involved in transcriptional regulation. May be involved in regulation of cell proliferation. The polypeptide is Zinc finger protein 324A (ZNF324) (Homo sapiens (Human)).